We begin with the raw amino-acid sequence, 131 residues long: Phosphoribosyl-AMP cyclohydrolase (131 aa).

A Mg(2+)-binding site is contributed by D78. Residue C79 coordinates Zn(2+). Residues D80 and D82 each coordinate Mg(2+). 2 residues coordinate Zn(2+): C96 and C103.

This sequence belongs to the PRA-CH family. Homodimer. Mg(2+) serves as cofactor. Requires Zn(2+) as cofactor.

Its subcellular location is the cytoplasm. It catalyses the reaction 1-(5-phospho-beta-D-ribosyl)-5'-AMP + H2O = 1-(5-phospho-beta-D-ribosyl)-5-[(5-phospho-beta-D-ribosylamino)methylideneamino]imidazole-4-carboxamide. The protein operates within amino-acid biosynthesis; L-histidine biosynthesis; L-histidine from 5-phospho-alpha-D-ribose 1-diphosphate: step 3/9. In terms of biological role, catalyzes the hydrolysis of the adenine ring of phosphoribosyl-AMP. The sequence is that of Phosphoribosyl-AMP cyclohydrolase from Neisseria meningitidis serogroup A / serotype 4A (strain DSM 15465 / Z2491).